The primary structure comprises 208 residues: Small ribosomal subunit protein uS4 (208 aa).

The S4 RNA-binding domain occupies 95–157 (RRIDNIVYRA…DSLKKLIRSN (63 aa)).

It belongs to the universal ribosomal protein uS4 family. In terms of assembly, part of the 30S ribosomal subunit. Contacts protein S5. The interaction surface between S4 and S5 is involved in control of translational fidelity.

In terms of biological role, one of the primary rRNA binding proteins, it binds directly to 16S rRNA where it nucleates assembly of the body of the 30S subunit. Functionally, with S5 and S12 plays an important role in translational accuracy. The sequence is that of Small ribosomal subunit protein uS4 from Borrelia garinii subsp. bavariensis (strain ATCC BAA-2496 / DSM 23469 / PBi) (Borreliella bavariensis).